A 364-amino-acid chain; its full sequence is Mannitol-1-phosphate 5-dehydrogenase (364 aa).

Position 6 to 17 (6 to 17) interacts with NAD(+); the sequence is VLHFGAGNIGRG.

This sequence belongs to the mannitol dehydrogenase family.

It carries out the reaction D-mannitol 1-phosphate + NAD(+) = beta-D-fructose 6-phosphate + NADH + H(+). This Mycoplasma pneumoniae (strain ATCC 29342 / M129 / Subtype 1) (Mycoplasmoides pneumoniae) protein is Mannitol-1-phosphate 5-dehydrogenase (mtlD).